A 248-amino-acid polypeptide reads, in one-letter code: 4-hydroxy-tetrahydrodipicolinate reductase (248 aa).

Residue aspartate 28 participates in NAD(+) binding. Lysine 29 lines the NADP(+) pocket. Residues 78 to 80 (ATT) and 102 to 105 (SYNM) contribute to the NAD(+) site. The Proton donor/acceptor role is filled by histidine 134. Histidine 135 is a binding site for (S)-2,3,4,5-tetrahydrodipicolinate. The active-site Proton donor is lysine 138. A (S)-2,3,4,5-tetrahydrodipicolinate-binding site is contributed by 144–145 (GT).

Belongs to the DapB family.

It localises to the cytoplasm. The enzyme catalyses (S)-2,3,4,5-tetrahydrodipicolinate + NAD(+) + H2O = (2S,4S)-4-hydroxy-2,3,4,5-tetrahydrodipicolinate + NADH + H(+). It catalyses the reaction (S)-2,3,4,5-tetrahydrodipicolinate + NADP(+) + H2O = (2S,4S)-4-hydroxy-2,3,4,5-tetrahydrodipicolinate + NADPH + H(+). The protein operates within amino-acid biosynthesis; L-lysine biosynthesis via DAP pathway; (S)-tetrahydrodipicolinate from L-aspartate: step 4/4. Its function is as follows. Catalyzes the conversion of 4-hydroxy-tetrahydrodipicolinate (HTPA) to tetrahydrodipicolinate. This chain is 4-hydroxy-tetrahydrodipicolinate reductase, found in Exiguobacterium sibiricum (strain DSM 17290 / CCUG 55495 / CIP 109462 / JCM 13490 / 255-15).